The chain runs to 211 residues: MELADIRREYTKGGLRRKDLKNDPIDQFNFWLEQAIKANLSDPTAMTVATVDKDGMPFQRIVLLKNVDKDGFVFYTNLGSRKAQHLEHNSKISLHFPWHPLERQVHITGVAEKLTAMENMKYFTSRPKESQLAAMASRQSSRISARGVLEGKFLELKQKFANGEIPVPSFWGGFRVKPQSIEFWQGGEHRLHDRFLYSQEQGEWHIDRLAP.

Residues 7–10 and lysine 65 each bind substrate; that span reads RREY. Residues 60-65, 75-76, arginine 81, lysine 82, and glutamine 104 contribute to the FMN site; these read RIVLLK and YT. Substrate is bound by residues tyrosine 122, arginine 126, and serine 130. FMN contacts are provided by residues 139-140 and tryptophan 184; that span reads QS. 190–192 provides a ligand contact to substrate; that stretch reads RLH. Arginine 194 is an FMN binding site.

It belongs to the pyridoxamine 5'-phosphate oxidase family. Homodimer. The cofactor is FMN.

It catalyses the reaction pyridoxamine 5'-phosphate + O2 + H2O = pyridoxal 5'-phosphate + H2O2 + NH4(+). The catalysed reaction is pyridoxine 5'-phosphate + O2 = pyridoxal 5'-phosphate + H2O2. It participates in cofactor metabolism; pyridoxal 5'-phosphate salvage; pyridoxal 5'-phosphate from pyridoxamine 5'-phosphate: step 1/1. The protein operates within cofactor metabolism; pyridoxal 5'-phosphate salvage; pyridoxal 5'-phosphate from pyridoxine 5'-phosphate: step 1/1. Its function is as follows. Catalyzes the oxidation of either pyridoxine 5'-phosphate (PNP) or pyridoxamine 5'-phosphate (PMP) into pyridoxal 5'-phosphate (PLP). The polypeptide is Pyridoxine/pyridoxamine 5'-phosphate oxidase (Vibrio vulnificus (strain CMCP6)).